The sequence spans 314 residues: Olfactory receptor 14A2 (314 aa).

At 1 to 26 the chain is on the extracellular side; sequence MANVTLVTGFLLMGFSNIQKLRILYG. Asn3 carries an N-linked (GlcNAc...) asparagine glycan. The chain crosses the membrane as a helical span at residues 27–47; it reads VLFLLIYLAALMSNLLIITLI. The Cytoplasmic segment spans residues 48 to 55; it reads TLDVKLQT. Residues 56-76 traverse the membrane as a helical segment; the sequence is PMYFFLKNLSFLDVFLVSVPI. Residues 77 to 91 are Extracellular-facing; that stretch reads PKFIVNNLTHNNSIS. A glycan (N-linked (GlcNAc...) asparagine) is linked at Asn83. Residues 92–112 traverse the membrane as a helical segment; the sequence is ILGCAFQLLLMTSFSAGEIFI. Residues Cys95 and Cys177 are joined by a disulfide bond. Over 113–136 the chain is Cytoplasmic; that stretch reads LTAMSYDRYVAICCPLNYEVIMNT. Residues 137–157 form a helical membrane-spanning segment; sequence GVCVLMASVSWAIGGLFGTAY. The Extracellular portion of the chain corresponds to 158 to 193; sequence TAGTFSMPFCGSSVIPQFFCDVPSLLRISCSETLMV. The helical transmembrane segment at 194 to 214 threads the bilayer; that stretch reads IYAGIGVGACLSISCFICIVI. Residues 215–237 are Cytoplasmic-facing; it reads SYIYIFSTVLKIPTTKGQSKAFS. The helical transmembrane segment at 238–258 threads the bilayer; that stretch reads TCFPHLTVFTVFIITAYFVYL. The Extracellular segment spans residues 259-267; that stretch reads KPPSNSPSV. The helical transmembrane segment at 268–290 threads the bilayer; it reads IDRLLSVIYTVMPPVFNPVTYSL. Residues 291–314 lie on the Cytoplasmic side of the membrane; that stretch reads RNNDMKCALIRLLQKTYGQEAYFI.

It belongs to the G-protein coupled receptor 1 family.

The protein localises to the cell membrane. Its function is as follows. Odorant receptor. This chain is Olfactory receptor 14A2 (OR14A2), found in Homo sapiens (Human).